A 284-amino-acid polypeptide reads, in one-letter code: MFDKTRLPYVALDVLCVLLAGLPFAILTSRHTPFQRGVFCNDESIKYPYKEDTIPYALLGGIIIPFSIIVIILGETLSVYCNLLHSNSFIRNNYIATIYKAIGTFLFGAAASQSLTDIAKYSIGRLRPHFLDVCDPDWSKINCSDGYIEYYICRGNAERVKEGRLSFYSGHSSFSMYCMLFVALYLQARMKGDWARLLRPTLQFGLVAVSIYVGLSRVSDYKHHWSDVLTGLIQGALVAILVAVYVSDFFKERTSFKERKEEDSHTTLHETPTTGNHYPSNHQP.

Topologically, residues 1–6 (MFDKTR) are cytoplasmic. Positions 5–7 (TRL) match the PDZ-binding; involved in localization to the apical cell membrane motif. Residues 7–27 (LPYVALDVLCVLLAGLPFAIL) form a helical membrane-spanning segment. Over 28–53 (TSRHTPFQRGVFCNDESIKYPYKEDT) the chain is Extracellular. A helical membrane pass occupies residues 54 to 74 (IPYALLGGIIIPFSIIVIILG). Over 75 to 94 (ETLSVYCNLLHSNSFIRNNY) the chain is Cytoplasmic. The chain crosses the membrane as a helical span at residues 95 to 115 (IATIYKAIGTFLFGAAASQSL). At 116–164 (TDIAKYSIGRLRPHFLDVCDPDWSKINCSDGYIEYYICRGNAERVKEGR) the chain is on the extracellular side. Residues 120–128 (KYSIGRLRP) are phosphatase sequence motif I. N142 carries an N-linked (GlcNAc...) asparagine glycan. Residues 165–185 (LSFYSGHSSFSMYCMLFVALY) traverse the membrane as a helical segment. Positions 168 to 171 (YSGH) are phosphatase sequence motif II. The active-site Proton donors is the H171. The Cytoplasmic portion of the chain corresponds to 186–199 (LQARMKGDWARLLR). Residues 200-220 (PTLQFGLVAVSIYVGLSRVSD) traverse the membrane as a helical segment. The segment at 216–227 (SRVSDYKHHWSD) is phosphatase sequence motif III. Residues 221-229 (YKHHWSDVL) are Extracellular-facing. Catalysis depends on H223, which acts as the Nucleophile. The chain crosses the membrane as a helical span at residues 230–250 (TGLIQGALVAILVAVYVSDFF). At 251–284 (KERTSFKERKEEDSHTTLHETPTTGNHYPSNHQP) the chain is on the cytoplasmic side. The interval 260 to 284 (KEEDSHTTLHETPTTGNHYPSNHQP) is disordered. Positions 269 to 284 (HETPTTGNHYPSNHQP) are enriched in polar residues.

Belongs to the PA-phosphatase related phosphoesterase family. As to quaternary structure, forms functional homodimers and homooligomers that are not required for substrate recognition and catalytic activity. Can also form heterooligomers with PLPP2 and PLPP3. N-glycosylated. N-linked sugars are of the complex type. N-glycosylation is not required for the phosphatase activity. In terms of tissue distribution, widely expressed with highest expression found in prostate. Found to be down-regulated in colon adenocarcinomas. Predominant in kidney, lung, placenta and liver. As to expression, predominant in heart and pancreas.

It is found in the cell membrane. The protein localises to the apical cell membrane. Its subcellular location is the membrane raft. The protein resides in the membrane. It localises to the caveola. The catalysed reaction is a 1,2-diacyl-sn-glycero-3-phosphate + H2O = a 1,2-diacyl-sn-glycerol + phosphate. The enzyme catalyses 1,2-dihexadecanoyl-sn-glycero-3-phosphate + H2O = 1,2-dihexadecanoyl-sn-glycerol + phosphate. It carries out the reaction 1,2-di-(9Z-octadecenoyl)-sn-glycero-3-phosphate + H2O = 1,2-di-(9Z-octadecenoyl)-sn-glycerol + phosphate. It catalyses the reaction a monoacyl-sn-glycero-3-phosphate + H2O = a monoacylglycerol + phosphate. The catalysed reaction is (9Z)-octadecenoyl-sn-glycero-3-phosphate + H2O = (9Z-octadecenoyl)-glycerol + phosphate. The enzyme catalyses a 1-acyl-sn-glycero-3-phosphate + H2O = a 1-acyl-sn-glycerol + phosphate. It carries out the reaction 1-(9Z-octadecenoyl)-sn-glycero-3-phosphate + H2O = 1-(9Z-octadecenoyl)-sn-glycerol + phosphate. It catalyses the reaction a 1,2-diacyl-sn-glycerol 3-diphosphate + H2O = a 1,2-diacyl-sn-glycero-3-phosphate + phosphate + H(+). The catalysed reaction is sphing-4-enine 1-phosphate + H2O = sphing-4-enine + phosphate. The enzyme catalyses an N-acylsphing-4-enine 1-phosphate + H2O = an N-acylsphing-4-enine + phosphate. It carries out the reaction N-(octanoyl)-sphing-4-enine-1-phosphate + H2O = N-octanoylsphing-4-enine + phosphate. It catalyses the reaction N-(9Z-octadecenoyl)-ethanolamine phosphate + H2O = N-(9Z-octadecenoyl) ethanolamine + phosphate. The catalysed reaction is 1-hexadecanoyl-2-(9Z-octadecenoyl)-sn-glycero-3-phosphate + H2O = 1-hexadecanoyl-2-(9Z-octadecenoyl)-sn-glycerol + phosphate. Its pathway is lipid metabolism; phospholipid metabolism. Its activity is regulated as follows. Magnesium-independent phospholipid phosphatase. Insensitive to N-ethylmaleimide. Inhibited by sphingosine, zinc ions and modestly by propanolol. Inhibited by vanadate. In terms of biological role, magnesium-independent phospholipid phosphatase of the plasma membrane that catalyzes the dephosphorylation of a variety of glycerolipid and sphingolipid phosphate esters including phosphatidate/PA, lysophosphatidate/LPA, diacylglycerol pyrophosphate/DGPP, sphingosine 1-phosphate/S1P and ceramide 1-phosphate/C1P. Also acts on N-oleoyl ethanolamine phosphate/N-(9Z-octadecenoyl)-ethanolamine phosphate, a potential physiological compound. Through its extracellular phosphatase activity allows both the hydrolysis and the cellular uptake of these bioactive lipid mediators from the milieu, regulating signal transduction in different cellular processes. It is for instance essential for the extracellular hydrolysis of S1P and subsequent conversion into intracellular S1P. Involved in the regulation of inflammation, platelets activation, cell proliferation and migration among other processes. May also have an intracellular activity to regulate phospholipid-mediated signaling pathways. The chain is Phospholipid phosphatase 1 from Homo sapiens (Human).